Here is a 585-residue protein sequence, read N- to C-terminus: Pyruvate kinase (585 aa).

Position 32 (R32) interacts with substrate. Residues N34, S36, D66, and T67 each contribute to the K(+) site. ATP is bound at residue 34–37 (NFSH). ATP-binding residues include R73 and K156. E221 provides a ligand contact to Mg(2+). Substrate-binding residues include G244, D245, and T277. D245 is a Mg(2+) binding site.

This sequence belongs to the pyruvate kinase family. In the C-terminal section; belongs to the PEP-utilizing enzyme family. Mg(2+) serves as cofactor. The cofactor is K(+).

The catalysed reaction is pyruvate + ATP = phosphoenolpyruvate + ADP + H(+). The protein operates within carbohydrate degradation; glycolysis; pyruvate from D-glyceraldehyde 3-phosphate: step 5/5. The protein is Pyruvate kinase (pyk) of Staphylococcus aureus (strain MRSA252).